The primary structure comprises 177 residues: Large ribosomal subunit protein uL6 (177 aa).

This sequence belongs to the universal ribosomal protein uL6 family. In terms of assembly, part of the 50S ribosomal subunit.

In terms of biological role, this protein binds to the 23S rRNA, and is important in its secondary structure. It is located near the subunit interface in the base of the L7/L12 stalk, and near the tRNA binding site of the peptidyltransferase center. This is Large ribosomal subunit protein uL6 from Actinobacillus succinogenes (strain ATCC 55618 / DSM 22257 / CCUG 43843 / 130Z).